A 595-amino-acid polypeptide reads, in one-letter code: MPVRQLPEIIVNRIAAGEVVERPASVVKELVENAIDAGSSRIDIFSDGGGRRKIVIADDGSGMTAADLALAVDRHATSKLDDEDLLQIRTLGFRGEALPSIGAVAKLSITTRHASEPHAWTLRVEGGDKTPIAPAALSQGTRVEVADLFFATPARLKFLKTDRTEAEAIREVVRRLAMARPDIAFTLAGEERAPVTWAAALPGAPGQLIRLGDILGADFRANAIEVRAEREGVVVEGFAASPALTKANALGQYLFVNGRPVRDKLILGAVRAAYSDYLPRDRHPVVALFVTLDSREVDANVHPAKTEVRFRNAGLVRALIVHALKDGLAREGRRTAANSAGSVISTFRPASMPPANWDWRASPSYPVGGSAAPSFAERAQAAFDVGAPSADIRPTEVTPDLLDRPLGAARTQIHETYIVSQTRDGLIVVDQHAAHERIVYERLKASLEANGVQRQILLIPDIVEMDEATVERLVARGEELAKFGLVIESFGPGAVAVRETPSLLGKTDAGGLLRDLAEHMAEWDEALPLERRLMHVAATMACHGSVRAGRVLKPEEMNALLREMEATPNSGQCNHGRPTYVELTLTDIEKLFGRR.

This sequence belongs to the DNA mismatch repair MutL/HexB family.

This protein is involved in the repair of mismatches in DNA. It is required for dam-dependent methyl-directed DNA mismatch repair. May act as a 'molecular matchmaker', a protein that promotes the formation of a stable complex between two or more DNA-binding proteins in an ATP-dependent manner without itself being part of a final effector complex. This Rhodopseudomonas palustris (strain TIE-1) protein is DNA mismatch repair protein MutL.